Reading from the N-terminus, the 694-residue chain is Ferric reductase transmembrane component 5 (694 aa).

The N-terminal stretch at 1 to 19 (MLFARLVLLLVYLAPGSLA) is a signal peptide. The Extracellular segment spans residues 20–163 (KPASTKKRTQ…LDNIDKGNVY (144 aa)). Residue Asn-117 is glycosylated (N-linked (GlcNAc...) asparagine). A helical transmembrane segment spans residues 164–184 (GVTICLYWIGVLFIAAVYHFL). Topologically, residues 185–222 (NFSRLKQTVFKNKVSAFLRGHYVLPALVHNHAMSVGRW) are cytoplasmic. The chain crosses the membrane as a helical span at residues 223–243 (FFIGLVPTRLETLVLFGYVLL). Topologically, residues 244-267 (HGFLLSSYNFDHNELLSDRRSQVL) are extracellular. Residues 268–288 (IFLSDRAGILAFAHFPLIVLF) form a helical membrane-spanning segment. The Ferric oxidoreductase domain occupies 274–408 (AGILAFAHFP…GWGEWIMACA (135 aa)). The Cytoplasmic portion of the chain corresponds to 289–311 (GGKNSTMTWLTGIRYTAFITYHK). Heme is bound by residues His-310 and His-324. Residues 312 to 334 (WLGRFMLVDCTIHAIGYTYHAYI) traverse the membrane as a helical segment. Residues 335–347 (ENYWKYVKYSDLW) lie on the Extracellular side of the membrane. Residues 348 to 368 (TSGRHAMIIVGILVFFSFFFF) traverse the membrane as a helical segment. Residues 369-371 (RRH) are Cytoplasmic-facing. A helical transmembrane segment spans residues 372–392 (YYELFVITHIILAIGFFHACW). Positions 380 and 394 each coordinate heme. The Extracellular segment spans residues 393–403 (KHCYKLGWGEW). A helical membrane pass occupies residues 404–424 (IMACALFWIADRILRLIKIAI). Residues 409 to 528 (LFWIADRILR…EGPYGQSTRT (120 aa)) form the FAD-binding FR-type domain. Topologically, residues 425–694 (FGMPWAKLKL…IEYVEEFQNW (270 aa)) are cytoplasmic. 473-479 (HPFTVMD) provides a ligand contact to FAD. NADP(+) contacts are provided by residues 520-523 (GPYG) and 660-661 (CG).

It belongs to the ferric reductase (FRE) family. Requires FAD as cofactor.

It localises to the cell membrane. It catalyses the reaction 2 a Fe(II)-siderophore + NADP(+) + H(+) = 2 a Fe(III)-siderophore + NADPH. In terms of biological role, metalloreductase responsible for reducing extracellular iron and copper prior to import. Catalyzes the reductive uptake of Fe(3+)-salts and Fe(3+) bound to catecholate or hydroxamate siderophores. Fe(3+) is reduced to Fe(2+), which then dissociates from the siderophore and can be imported by the high-affinity Fe(2+) transport complex in the plasma membrane. The sequence is that of Ferric reductase transmembrane component 5 (FRE5) from Saccharomyces cerevisiae (strain ATCC 204508 / S288c) (Baker's yeast).